Consider the following 132-residue polypeptide: Flagellar assembly factor FliW (132 aa).

It belongs to the FliW family. In terms of assembly, interacts with translational regulator CsrA and flagellin(s).

The protein localises to the cytoplasm. Acts as an anti-CsrA protein, binds CsrA and prevents it from repressing translation of its target genes, one of which is flagellin. Binds to flagellin and participates in the assembly of the flagellum. This is Flagellar assembly factor FliW from Borreliella afzelii (strain PKo) (Borrelia afzelii).